Here is a 426-residue protein sequence, read N- to C-terminus: 3-phosphoshikimate 1-carboxyvinyltransferase (426 aa).

Positions 22, 23, and 27 each coordinate 3-phosphoshikimate. Phosphoenolpyruvate is bound at residue lysine 22. Residues glycine 96 and arginine 124 each contribute to the phosphoenolpyruvate site. Serine 170, serine 171, glutamine 172, serine 198, aspartate 314, asparagine 337, and lysine 341 together coordinate 3-phosphoshikimate. Glutamine 172 is a phosphoenolpyruvate binding site. Aspartate 314 functions as the Proton acceptor in the catalytic mechanism. Residues arginine 345, arginine 387, and lysine 412 each contribute to the phosphoenolpyruvate site.

It belongs to the EPSP synthase family. As to quaternary structure, monomer.

It localises to the cytoplasm. It catalyses the reaction 3-phosphoshikimate + phosphoenolpyruvate = 5-O-(1-carboxyvinyl)-3-phosphoshikimate + phosphate. The protein operates within metabolic intermediate biosynthesis; chorismate biosynthesis; chorismate from D-erythrose 4-phosphate and phosphoenolpyruvate: step 6/7. Catalyzes the transfer of the enolpyruvyl moiety of phosphoenolpyruvate (PEP) to the 5-hydroxyl of shikimate-3-phosphate (S3P) to produce enolpyruvyl shikimate-3-phosphate and inorganic phosphate. The chain is 3-phosphoshikimate 1-carboxyvinyltransferase from Shewanella loihica (strain ATCC BAA-1088 / PV-4).